Consider the following 594-residue polypeptide: SHC-transforming protein 3 (594 aa).

Positions 98–147 (GSCSAPSLAAPDGSAPSAPRAPAMSAARKGRPGDEPLPRPPRGAPHASDQ) are disordered. Positions 101-124 (SAPSLAAPDGSAPSAPRAPAMSAA) are enriched in low complexity. The region spanning 149 to 334 (LGPGVTYVVK…LDEPWTEEEG (186 aa)) is the PID domain. The CH1 stretch occupies residues 335–498 (DGSDHPYYNS…KMLEELQAET (164 aa)). Disordered regions lie at residues 351–373 (PPGG…AQFA) and 386–405 (GDTF…SSDI). Over residues 393–405 (WQQTPLRQGSSDI) the composition is skewed to polar residues. Residue Ser402 is modified to Phosphoserine. The SH2 domain maps to 499 to 590 (WYQGEMSRKE…GSELCLQQPV (92 aa)).

As to quaternary structure, interacts with the Trk receptors in a phosphotyrosine-dependent manner. Once activated, binds to GRB2. Interacts with activated EGF receptors. Post-translationally, tyrosine phosphorylated. As to expression, mainly expressed in brain. Hardly detectable in other tissues, except in pancreas. Highly expressed in the cerebral cortex, frontal and temporal lobes, occipital pole, hippocampus, caudate nucleus and amygdala. Expressed at low level in the cerebellum, medulla and spinal cord.

Its function is as follows. Signaling adapter that couples activated growth factor receptors to signaling pathway in neurons. Involved in the signal transduction pathways of neurotrophin-activated Trk receptors in cortical neurons. In Homo sapiens (Human), this protein is SHC-transforming protein 3 (SHC3).